A 331-amino-acid chain; its full sequence is MARVVFRDARIYLIQWLTKIRHTLNQRQSLNTDKEHLRKIARGMFWLMLLIISAKMAHSLWRYISFSAEYTAVSQPVNKPSRVDAKTFDKNDVQLISQQNWFGKYQPVAAQVKQPEPVPVAETRLNVVLRGIAFGARPGAVIEEGGKQQVYLQGETLGSHNAVIEEINRDHVMLRYQGKIERLSLAEEERSTVAVTNKKAVSDEAKQAVAEPAVSVPVEIPAAVRQALAKDPQKIFNYIQLTPVRKEGIVGYAAKPGADRSLFDASGFKEGDIAIALNQQDFTDPRAMIALMRQLPSMDSIQLTVLRKGARHDISIALRYRLFCPPYWKKS.

A helical transmembrane segment spans residues 44–60 (MFWLMLLIISAKMAHSL).

This sequence belongs to the GSP C family.

The protein localises to the cell inner membrane. Involved in a type II secretion system (T2SS, formerly general secretion pathway, GSP) for the export of folded proteins across the outer membrane. The sequence is that of Putative type II secretion system C-type protein YghF from Escherichia coli (strain K12).